Consider the following 247-residue polypeptide: MTYKLDRNSLRQQVMSPQSNASENIINLSSPNNYKQWLYGIETAAEYANEYMNEFVHTGDIQSMKRDYNLSANDESFVKTVFNSFLVKLYKKTIVGEAACEMNWICDDSLGRVSAYDIFSHFEENYNEVTIGSRLTLIEDLPNISSKPVDEIASFLKTLFTMLEDNSEEQDKKKRRDTNIALLLMTFLPELKESFHEKFGDSKALQLSQVIRFCKLNASSNSSSSVSDALVAQDRRNYQKKGNKGCI.

This is an uncharacterized protein from Saccharomyces cerevisiae (strain ATCC 204508 / S288c) (Baker's yeast).